The primary structure comprises 379 residues: Bifunctional riboflavin kinase/FMN phosphatase (379 aa).

N-acetylserine is present on Ser-2. Asp-17 serves as the catalytic Nucleophile; for FMN phosphatase activity. Mg(2+)-binding residues include Asp-17 and Asp-19. Catalysis depends on Asp-19, which acts as the Proton donor; for FMN phosphatase activity. 4 residues coordinate ATP: Gly-248, Lys-254, Thr-260, and Asn-262. Residue Thr-260 participates in Mg(2+) binding. Glu-312 acts as the Nucleophile; for riboflavin kinase activity in catalysis. ATP-binding residues include Leu-315, His-317, and Tyr-324. Residues Arg-337 and Phe-342 each contribute to the FMN site.

It in the N-terminal section; belongs to the HAD-like hydrolase superfamily. CbbY/CbbZ/Gph/YieH family. The protein in the C-terminal section; belongs to the flavokinase family. As to quaternary structure, monomer. Mg(2+) is required as a cofactor.

It carries out the reaction riboflavin + ATP = FMN + ADP + H(+). It catalyses the reaction FMN + H2O = riboflavin + phosphate. The protein operates within cofactor biosynthesis; FMN biosynthesis; FMN from riboflavin (ATP route): step 1/1. Bifunctional enzyme that catalyzes the hydrolysis of flavin-mononucleotide (FMN) to riboflavin (vitamin B2) and the phosphorylation of riboflavin to form (FMN) coenzyme. The polypeptide is Bifunctional riboflavin kinase/FMN phosphatase (Arabidopsis thaliana (Mouse-ear cress)).